The primary structure comprises 318 residues: Ribonuclease Z (318 aa).

Residues His63, His65, Asp67, His68, His142, Asp210, and His268 each coordinate Zn(2+). Asp67 serves as the catalytic Proton acceptor.

This sequence belongs to the RNase Z family. Homodimer. Zn(2+) is required as a cofactor.

The enzyme catalyses Endonucleolytic cleavage of RNA, removing extra 3' nucleotides from tRNA precursor, generating 3' termini of tRNAs. A 3'-hydroxy group is left at the tRNA terminus and a 5'-phosphoryl group is left at the trailer molecule.. In terms of biological role, zinc phosphodiesterase, which displays some tRNA 3'-processing endonuclease activity. Probably involved in tRNA maturation, by removing a 3'-trailer from precursor tRNA. The protein is Ribonuclease Z of Thermobifida fusca (strain YX).